The following is a 308-amino-acid chain: Aspartate carbamoyltransferase catalytic subunit (308 aa).

Carbamoyl phosphate-binding residues include R55 and T56. An L-aspartate-binding site is contributed by K83. The carbamoyl phosphate site is built by R105, H133, and Q136. L-aspartate contacts are provided by R166 and R220. Residues G261 and P262 each contribute to the carbamoyl phosphate site.

Belongs to the aspartate/ornithine carbamoyltransferase superfamily. ATCase family. As to quaternary structure, heterododecamer (2C3:3R2) of six catalytic PyrB chains organized as two trimers (C3), and six regulatory PyrI chains organized as three dimers (R2).

The enzyme catalyses carbamoyl phosphate + L-aspartate = N-carbamoyl-L-aspartate + phosphate + H(+). It participates in pyrimidine metabolism; UMP biosynthesis via de novo pathway; (S)-dihydroorotate from bicarbonate: step 2/3. Catalyzes the condensation of carbamoyl phosphate and aspartate to form carbamoyl aspartate and inorganic phosphate, the committed step in the de novo pyrimidine nucleotide biosynthesis pathway. In Chlorobaculum parvum (strain DSM 263 / NCIMB 8327) (Chlorobium vibrioforme subsp. thiosulfatophilum), this protein is Aspartate carbamoyltransferase catalytic subunit.